The following is a 296-amino-acid chain: Protoheme IX farnesyltransferase (296 aa).

The Cytoplasmic portion of the chain corresponds to 1-9; that stretch reads MMFKQYLQV. A helical membrane pass occupies residues 10–28; it reads TKPGIIFGNLISVIGGFLL. Over 29–37 the chain is Periplasmic; sequence ASKGSIDYP. Residues 38–56 traverse the membrane as a helical segment; that stretch reads LFIYTLVGVSLVVASGCVF. At 57–78 the chain is on the cytoplasmic side; that stretch reads NNFIDRDIDRKMERTKNRVLVK. The chain crosses the membrane as a helical span at residues 79–97; that stretch reads GLISPGVSLVYATLLGIAG. The Periplasmic segment spans residues 98 to 107; that stretch reads FMLLWFGANP. The helical transmembrane segment at 108-126 threads the bilayer; it reads LACWLGVMGFVVYVGIYSL. Topologically, residues 127 to 197 are cytoplasmic; it reads YMKRHSVYGT…YQAANIPVLP (71 aa). A helical transmembrane segment spans residues 198–216; sequence VVKGISVAKNHITLYIIAF. The Periplasmic portion of the chain corresponds to 217 to 228; the sequence is AVATLMLTLGGY. The helical transmembrane segment at 229–247 threads the bilayer; sequence AGYKYLVVAAAVSVWWLGM. The Cytoplasmic portion of the chain corresponds to 248–268; it reads ALRGYKVEDDKVWARKLFGFS. Residues 269–287 form a helical membrane-spanning segment; the sequence is IIAITALSIMMSVDFMVPN. Topologically, residues 288-296 are periplasmic; the sequence is SQSLLTYVW.

Belongs to the UbiA prenyltransferase family. Protoheme IX farnesyltransferase subfamily.

Its subcellular location is the cell inner membrane. The enzyme catalyses heme b + (2E,6E)-farnesyl diphosphate + H2O = Fe(II)-heme o + diphosphate. It functions in the pathway porphyrin-containing compound metabolism; heme O biosynthesis; heme O from protoheme: step 1/1. Converts heme B (protoheme IX) to heme O by substitution of the vinyl group on carbon 2 of heme B porphyrin ring with a hydroxyethyl farnesyl side group. This is Protoheme IX farnesyltransferase from Salmonella arizonae (strain ATCC BAA-731 / CDC346-86 / RSK2980).